Reading from the N-terminus, the 64-residue chain is Large ribosomal subunit protein bL35 (64 aa).

The tract at residues 17-41 (TGSGKVKRERMNGSHNLEHKNRKRT) is disordered. The span at 25-35 (ERMNGSHNLEH) shows a compositional bias: basic and acidic residues.

Belongs to the bacterial ribosomal protein bL35 family.

The sequence is that of Large ribosomal subunit protein bL35 from Chlorobaculum parvum (strain DSM 263 / NCIMB 8327) (Chlorobium vibrioforme subsp. thiosulfatophilum).